The sequence spans 333 residues: Adenosine deaminase (333 aa).

Zn(2+)-binding residues include His-12 and His-14. Substrate-binding residues include His-14, Asp-16, and Gly-170. His-197 lines the Zn(2+) pocket. Glu-200 (proton donor) is an active-site residue. Asp-278 is a Zn(2+) binding site. Residue Asp-279 coordinates substrate.

Belongs to the metallo-dependent hydrolases superfamily. Adenosine and AMP deaminases family. Adenosine deaminase subfamily. Requires Zn(2+) as cofactor.

The enzyme catalyses adenosine + H2O + H(+) = inosine + NH4(+). It catalyses the reaction 2'-deoxyadenosine + H2O + H(+) = 2'-deoxyinosine + NH4(+). Catalyzes the hydrolytic deamination of adenosine and 2-deoxyadenosine. The polypeptide is Adenosine deaminase (Escherichia coli O45:K1 (strain S88 / ExPEC)).